The primary structure comprises 184 residues: Large ribosomal subunit protein uL6 (184 aa).

This sequence belongs to the universal ribosomal protein uL6 family. In terms of assembly, part of the 50S ribosomal subunit.

In terms of biological role, this protein binds to the 23S rRNA, and is important in its secondary structure. It is located near the subunit interface in the base of the L7/L12 stalk, and near the tRNA binding site of the peptidyltransferase center. The sequence is that of Large ribosomal subunit protein uL6 from Mycoplasma genitalium (strain ATCC 33530 / DSM 19775 / NCTC 10195 / G37) (Mycoplasmoides genitalium).